Consider the following 201-residue polypeptide: GTP cyclohydrolase 1 (201 aa).

Residues Cys90, His93, and Cys163 each contribute to the Zn(2+) site.

Belongs to the GTP cyclohydrolase I family. Toroid-shaped homodecamer, composed of two pentamers of five dimers.

It catalyses the reaction GTP + H2O = 7,8-dihydroneopterin 3'-triphosphate + formate + H(+). It participates in cofactor biosynthesis; 7,8-dihydroneopterin triphosphate biosynthesis; 7,8-dihydroneopterin triphosphate from GTP: step 1/1. This chain is GTP cyclohydrolase 1 (folE), found in Streptomyces coelicolor (strain ATCC BAA-471 / A3(2) / M145).